A 146-amino-acid polypeptide reads, in one-letter code: Ribonuclease H (146 aa).

Positions 1–141 constitute an RNase H type-1 domain; the sequence is MEKIDIFTDG…ADALANRGVE (141 aa). Residues D9, E47, D69, and D133 each contribute to the Mg(2+) site.

The protein belongs to the RNase H family. As to quaternary structure, monomer. The cofactor is Mg(2+).

The protein resides in the cytoplasm. It carries out the reaction Endonucleolytic cleavage to 5'-phosphomonoester.. Functionally, endonuclease that specifically degrades the RNA of RNA-DNA hybrids. The sequence is that of Ribonuclease H from Herminiimonas arsenicoxydans.